Reading from the N-terminus, the 188-residue chain is dCTP deaminase (188 aa).

Residues 111–116, 135–137, Gln-156, Tyr-170, Lys-179, and Gln-180 contribute to the dCTP site; these read KSTYAR and TLE. Glu-137 acts as the Proton donor/acceptor in catalysis.

Belongs to the dCTP deaminase family. As to quaternary structure, homotrimer.

The enzyme catalyses dCTP + H2O + H(+) = dUTP + NH4(+). Its pathway is pyrimidine metabolism; dUMP biosynthesis; dUMP from dCTP (dUTP route): step 1/2. Catalyzes the deamination of dCTP to dUTP. This chain is dCTP deaminase, found in Orientia tsutsugamushi (strain Ikeda) (Rickettsia tsutsugamushi).